Reading from the N-terminus, the 1120-residue chain is ISWI chromatin-remodeling complex ATPase ISW2 (1120 aa).

A compositionally biased stretch (basic and acidic residues) spans 1–16 (MTTQQEEQRSDTKNSK). 2 disordered regions span residues 1–58 (MTTQ…VEDR) and 129–153 (LSKS…EDAE). Residues serine 17 and serine 19 each carry the phosphoserine modification. Positions 47–58 (LSDKEIYTVEDR) are enriched in basic and acidic residues. A Helicase ATP-binding domain is found at 196–361 (ISLHENKLSG…WALLNFLLPD (166 aa)). ATP is bound at residue 209 to 216 (DEMGLGKT). Positions 312 to 315 (DEAH) match the DEAH box motif. A Helicase C-terminal domain is found at 494-645 (ILDKLLKRLK…QLVIQQGTGK (152 aa)). 2 disordered regions span residues 764 to 783 (GGGS…PRAP) and 828 to 853 (NEGS…KGHE). A Phosphoserine modification is found at serine 831. The 53-residue stretch at 886 to 938 (KAFTNWNKRDFMAFINACAKYGRDDMENIKKSIDSKTPEEVEVYAKIFWERLK) folds into the SANT domain. A disordered region spans residues 1062 to 1120 (PDANKKKRSRTSATREDTPLSQNESTRASTVPNLPTTMVTNQKDTNDHVDKRTKIDQEA). Threonine 1079 bears the Phosphothreonine mark. Polar residues predominate over residues 1080–1104 (PLSQNESTRASTVPNLPTTMVTNQK). The residue at position 1082 (serine 1082) is a Phosphoserine. Residues 1105-1120 (DTNDHVDKRTKIDQEA) show a composition bias toward basic and acidic residues.

It belongs to the SNF2/RAD54 helicase family. ISWI subfamily. As to quaternary structure, component of the ISW2 complex, which at least consists of ISW2, ITC1, DLS1 and DPB4. May form a stable subcomplex with ITC1.

Its subcellular location is the nucleus. In terms of biological role, catalytic component of the ISW2 complex, which acts in remodeling the chromatin by catalyzing an ATP-dependent alteration in the structure of nucleosomal DNA. The ISW2 complex is involved in coordinating transcriptional repression and in inheritance of telomeric silencing. It is involved in repression of MAT a-specific genes, INO1, and early meiotic genes during mitotic growth dependent upon transcription factor UME6 and in a parallel pathway to the RPD3-SIN3 histone deacetylase complex. The chain is ISWI chromatin-remodeling complex ATPase ISW2 (ISW2) from Saccharomyces cerevisiae (strain ATCC 204508 / S288c) (Baker's yeast).